The sequence spans 293 residues: Elongation factor Ts (293 aa).

The involved in Mg(2+) ion dislocation from EF-Tu stretch occupies residues 80–83; sequence TDFV.

It belongs to the EF-Ts family.

It is found in the cytoplasm. Its function is as follows. Associates with the EF-Tu.GDP complex and induces the exchange of GDP to GTP. It remains bound to the aminoacyl-tRNA.EF-Tu.GTP complex up to the GTP hydrolysis stage on the ribosome. The polypeptide is Elongation factor Ts (Burkholderia cenocepacia (strain ATCC BAA-245 / DSM 16553 / LMG 16656 / NCTC 13227 / J2315 / CF5610) (Burkholderia cepacia (strain J2315))).